A 1224-amino-acid polypeptide reads, in one-letter code: ATP-dependent helicase/nuclease subunit A (1224 aa).

In terms of domain architecture, UvrD-like helicase ATP-binding spans 15-480 (VIWTDAQWQS…IDLSQNFRSR (466 aa)). 36 to 43 (AAAGSGKT) serves as a coordination point for ATP. In terms of domain architecture, UvrD-like helicase C-terminal spans 497 to 791 (EQVGEISYDD…RMMTIHSSKG (295 aa)).

This sequence belongs to the helicase family. AddA subfamily. As to quaternary structure, heterodimer of AddA and AddB/RexB. Mg(2+) serves as cofactor.

It carries out the reaction Couples ATP hydrolysis with the unwinding of duplex DNA by translocating in the 3'-5' direction.. The enzyme catalyses ATP + H2O = ADP + phosphate + H(+). Its function is as follows. The heterodimer acts as both an ATP-dependent DNA helicase and an ATP-dependent, dual-direction single-stranded exonuclease. Recognizes the chi site generating a DNA molecule suitable for the initiation of homologous recombination. The AddA nuclease domain is required for chi fragment generation; this subunit has the helicase and 3' -&gt; 5' nuclease activities. The protein is ATP-dependent helicase/nuclease subunit A of Staphylococcus epidermidis (strain ATCC 12228 / FDA PCI 1200).